The following is a 184-amino-acid chain: Peptide deformylase (184 aa).

Fe cation-binding residues include Cys-98 and His-140. Residue Glu-141 is part of the active site. His-144 is a Fe cation binding site.

The protein belongs to the polypeptide deformylase family. It depends on Fe(2+) as a cofactor.

It catalyses the reaction N-terminal N-formyl-L-methionyl-[peptide] + H2O = N-terminal L-methionyl-[peptide] + formate. Functionally, removes the formyl group from the N-terminal Met of newly synthesized proteins. Requires at least a dipeptide for an efficient rate of reaction. N-terminal L-methionine is a prerequisite for activity but the enzyme has broad specificity at other positions. The sequence is that of Peptide deformylase from Bacteroides fragilis (strain ATCC 25285 / DSM 2151 / CCUG 4856 / JCM 11019 / LMG 10263 / NCTC 9343 / Onslow / VPI 2553 / EN-2).